We begin with the raw amino-acid sequence, 444 residues long: Transposase for insertion sequence element IS1557 (444 aa).

Residues 273–292 are disordered; that stretch reads PKWGRGRPGKNAAPRPGRER.

Belongs to the transposase 12 family.

The sequence is that of Transposase for insertion sequence element IS1557 from Mycobacterium tuberculosis (strain CDC 1551 / Oshkosh).